Reading from the N-terminus, the 504-residue chain is Amphoterin-induced protein 3 (504 aa).

A signal peptide spans 1–19 (MTWLVLLGTLLCMLRVGLG). Topologically, residues 20–383 (TPDSEGFPPR…PRPEPEAFNT (364 aa)) are extracellular. Residues 25–61 (GFPPRALHNCPYKCICAADLLSCTGLGLQDVPAELPA) form the LRRNT domain. Disulfide bonds link cysteine 34–cysteine 40 and cysteine 38–cysteine 47. 6 LRR repeats span residues 62 to 83 (ATAD…WLAP), 86 to 107 (QLRA…VFVN), 110 to 133 (GLRL…DGLG), 134 to 155 (ALEK…AFHG), 158 to 178 (ALSH…DHLH), and 184 to 207 (HLLT…AALP). Asparagine 107 carries N-linked (GlcNAc...) asparagine glycosylation. The 57-residue stretch at 219 to 275 (NPLPCDCRLYHLLQRWHQRGLSAVRDFAREYVCLAFKVPASRVRFFQHSRVFENCSS) folds into the LRRCT domain. 3 cysteine pairs are disulfide-bonded: cysteine 223–cysteine 251, cysteine 225–cysteine 273, and cysteine 300–cysteine 352. 4 N-linked (GlcNAc...) asparagine glycosylation sites follow: asparagine 272, asparagine 301, asparagine 362, and asparagine 368. The region spanning 277 to 370 (PALGLERPEE…HNQTHEYNVS (94 aa)) is the Ig-like C2-type domain. A helical transmembrane segment spans residues 384–404 (GFTTLLGCAVGLVLVLLYLFA). Over 405 to 504 (PPCRCCRRAC…SIGSEGPMTT (100 aa)) the chain is Cytoplasmic. The disordered stretch occupies residues 422 to 448 (TPSPLQELSAQSSVLSTTPPDAPSRKA). Residues 424–440 (SPLQELSAQSSVLSTTP) are compositionally biased toward polar residues.

Belongs to the immunoglobulin superfamily. AMIGO family. Binds AMIGO1 or AMIGO2.

The protein localises to the membrane. Its function is as follows. May mediate heterophilic cell-cell interaction. May contribute to signal transduction through its intracellular domain. This chain is Amphoterin-induced protein 3, found in Homo sapiens (Human).